The primary structure comprises 536 residues: Heparanase (536 aa).

Residues 1–28 (MLRPLLLLWLWGRLGALTQGTPAGTAPT) form the signal peptide. Residues 55–57 (DAS) and Thr-90 contribute to the heparan sulfate group site. Positions 103–150 (PTSEERSYWQSQDNNDICGSERVSADVLRKLQMEWPFQELLLLREQYQ) are cleaved as a propeptide — linker peptide. Cys-120 and Cys-172 are joined by a disulfide. 151 to 155 (REFKN) is a binding site for heparan sulfate group. Residues Asn-155, Asn-193, and Asn-210 are each glycosylated (N-linked (GlcNAc...) asparagine). Glu-218 acts as the Proton donor in catalysis. Residues 263–273 (QPRGKTVKLLR), His-289, and Arg-296 contribute to the heparan sulfate group site. The required for heterodimerization with the heparanase 8 kDa subunit stretch occupies residues 281–410 (EVIDSLTWHH…LLFKKLVGPK (130 aa)). Glu-336 functions as the Nucleophile in the catalytic mechanism. Heparan sulfate group is bound by residues 341-343 (YGG) and 382-384 (GNY). A disulfide bridge links Cys-430 with Cys-535. The N-linked (GlcNAc...) asparagine glycan is linked to Asn-452. The tract at residues 520–536 (FSYGFFVIRNAKIAACI) is required for transferring proheparanase to the Golgi apparatus, secretion and subsequent enzyme activity and for enhancement of PKB/AKT1 phosphorylation.

The protein belongs to the glycosyl hydrolase 79 family. Heterodimer; heterodimer formation between the 8 kDa and the 50 kDa subunits is required for enzyme activity. Interacts with TF; the interaction, inhibited by heparin, enhances the generation of activated factor X and activates coagulation. Interacts with HRG; the interaction is enhanced at acidic pH, partially inhibits binding of HPSE to cell surface receptors and modulates its enzymatic activity. Interacts with SDC1; the interaction enhances the shedding of SDC1. Interacts with HPSE2. In terms of processing, proteolytically processed. The cleavage of the 65 kDa form leads to the generation of a linker peptide, and the 8 kDa and 50 kDa products. The active form, the 8/50 kDa heterodimer, is resistant to degradation. Complete removal of the linker peptide appears to be a prerequisite to the complete activation of the enzyme. N-glycosylated. Glycosylation of the 50 kDa subunit appears to be essential for its solubility.

The protein localises to the lysosome membrane. The protein resides in the secreted. It is found in the nucleus. It carries out the reaction endohydrolysis of (1-&gt;4)-beta-D-glycosidic bonds of heparan sulfate chains in heparan sulfate proteoglycan.. Its activity is regulated as follows. Inhibited by laminarin sulfate and, to a lower extent, by heparin and sulfamin. Activated by calcium and magnesium. Inhibited by EDTA. In terms of biological role, endoglycosidase that cleaves heparan sulfate proteoglycans (HSPGs) into heparan sulfate side chains and core proteoglycans. Participates in extracellular matrix (ECM) degradation and remodeling. Selectively cleaves the linkage between a glucuronic acid unit and an N-sulfo glucosamine unit carrying either a 3-O-sulfo or a 6-O-sulfo group. Can also cleave the linkage between a glucuronic acid unit and an N-sulfo glucosamine unit carrying a 2-O-sulfo group, but not linkages between a glucuronic acid unit and a 2-O-sulfated iduronic acid moiety. It is essentially inactive at neutral pH but becomes active under acidic conditions such as during tumor invasion and in inflammatory processes. Facilitates cell migration associated with metastasis, wound healing and inflammation. Enhances shedding of syndecans, and increases endothelial invasion and angiogenesis in myelomas. Acts as a procoagulant by increasing the generation of activation factor X in the presence of tissue factor and activation factor VII. Increases cell adhesion to the extracellular matrix (ECM), independent of its enzymatic activity. Induces AKT1/PKB phosphorylation via lipid rafts increasing cell mobility and invasion. Heparin increases this AKT1/PKB activation. Regulates osteogenesis. Enhances angiogenesis through up-regulation of SRC-mediated activation of VEGF. Implicated in hair follicle inner root sheath differentiation and hair homeostasis. The sequence is that of Heparanase (Hpse) from Rattus norvegicus (Rat).